We begin with the raw amino-acid sequence, 297 residues long: Acetaldehyde dehydrogenase (297 aa).

NAD(+) is bound at residue 15–18 (SGSI). C130 acts as the Acyl-thioester intermediate in catalysis. Residues 162-170 (SAGIATREN) and N272 each bind NAD(+).

The protein belongs to the acetaldehyde dehydrogenase family.

It catalyses the reaction acetaldehyde + NAD(+) + CoA = acetyl-CoA + NADH + H(+). The protein is Acetaldehyde dehydrogenase (mhpF) of Burkholderia thailandensis (strain ATCC 700388 / DSM 13276 / CCUG 48851 / CIP 106301 / E264).